Here is a 112-residue protein sequence, read N- to C-terminus: Large ribosomal subunit protein mL53 (112 aa).

The protein belongs to the mitochondrion-specific ribosomal protein mL53 family. As to quaternary structure, component of the mitochondrial large ribosomal subunit (mt-LSU). Mature mammalian 55S mitochondrial ribosomes consist of a small (28S) and a large (39S) subunit. The 28S small subunit contains a 12S ribosomal RNA (12S mt-rRNA) and 30 different proteins. The 39S large subunit contains a 16S rRNA (16S mt-rRNA), a copy of mitochondrial valine transfer RNA (mt-tRNA(Val)), which plays an integral structural role, and 52 different proteins. mL53 is located at the L7/L12 stalk.

Its subcellular location is the mitochondrion. This is Large ribosomal subunit protein mL53 (MRPL53) from Homo sapiens (Human).